The chain runs to 118 residues: MSRGSTNIMLRKLITSLKKQDKAIWVRVAEELEAPRRKRAYINIYKINRYSKANDIIVVPGKVLGVGNLDHPVTVVALSFSKPAKEKILRSGGKVMSLYKAIQELNDFKGKTVRLMKQ.

Belongs to the eukaryotic ribosomal protein eL18 family.

The protein is Large ribosomal subunit protein eL18 (rpl18e) of Sulfolobus acidocaldarius (strain ATCC 33909 / DSM 639 / JCM 8929 / NBRC 15157 / NCIMB 11770).